Consider the following 258-residue polypeptide: tRNA pseudouridine synthase A (258 aa).

Residue Asp52 is the Nucleophile of the active site. Tyr110 provides a ligand contact to substrate.

It belongs to the tRNA pseudouridine synthase TruA family. As to quaternary structure, homodimer.

The enzyme catalyses uridine(38/39/40) in tRNA = pseudouridine(38/39/40) in tRNA. In terms of biological role, formation of pseudouridine at positions 38, 39 and 40 in the anticodon stem and loop of transfer RNAs. In Francisella tularensis subsp. tularensis (strain FSC 198), this protein is tRNA pseudouridine synthase A.